A 507-amino-acid polypeptide reads, in one-letter code: Cobyric acid synthase (507 aa).

One can recognise a GATase cobBQ-type domain in the interval 273–468 (RPVIAVIAYP…LHGMFEDPAV (196 aa)). The active-site Nucleophile is the C354. H460 is an active-site residue.

This sequence belongs to the CobB/CobQ family. CobQ subfamily.

It functions in the pathway cofactor biosynthesis; adenosylcobalamin biosynthesis. Catalyzes amidations at positions B, D, E, and G on adenosylcobyrinic A,C-diamide. NH(2) groups are provided by glutamine, and one molecule of ATP is hydrogenolyzed for each amidation. This is Cobyric acid synthase from Polaromonas sp. (strain JS666 / ATCC BAA-500).